Consider the following 255-residue polypeptide: Glutamate racemase (255 aa).

Residues 7-8 (DS) and 39-40 (YG) contribute to the substrate site. C70 acts as the Proton donor/acceptor in catalysis. 71–72 (NT) provides a ligand contact to substrate. C181 functions as the Proton donor/acceptor in the catalytic mechanism. A substrate-binding site is contributed by 182–183 (TH).

It belongs to the aspartate/glutamate racemases family.

It catalyses the reaction L-glutamate = D-glutamate. It participates in cell wall biogenesis; peptidoglycan biosynthesis. Its function is as follows. Provides the (R)-glutamate required for cell wall biosynthesis. This Helicobacter pylori (strain ATCC 700392 / 26695) (Campylobacter pylori) protein is Glutamate racemase.